Here is a 203-residue protein sequence, read N- to C-terminus: Large ribosomal subunit protein bL25 (203 aa).

Belongs to the bacterial ribosomal protein bL25 family. CTC subfamily. In terms of assembly, part of the 50S ribosomal subunit; part of the 5S rRNA/L5/L18/L25 subcomplex. Contacts the 5S rRNA. Binds to the 5S rRNA independently of L5 and L18.

In terms of biological role, this is one of the proteins that binds to the 5S RNA in the ribosome where it forms part of the central protuberance. This is Large ribosomal subunit protein bL25 from Cellvibrio japonicus (strain Ueda107) (Pseudomonas fluorescens subsp. cellulosa).